The following is an 824-amino-acid chain: MRGLGLWLLGAMMLPAIAPSRPWALMEQYEVVLPWRLPGPRVRRALPSHLGLHPERVSYVLGATGHNFTLHLRKNRDLLGSGYTETYTAANGSEVTEQPRGQDHCFYQGHVEGYPDSAASLSTCAGLRGFFQVGSDLHLIEPLDEGGEGGRHAVYQAEHLLQTAGTCGVSDDSLGSLLGPRTAAVFRPRPGDSLPSRETRYVELYVVVDNAEFQMLGSEAAVRHRVLEVVNHVDKLYQKLNFRVVLVGLEIWNSQDRFHVSPDPSVTLENLLTWQARQRTRRHLHDNVQLITGVDFTGTTVGFARVSAMCSHSSGAVNQDHSKNPVGVACTMAHEMGHNLGMDHDENVQGCRCQERFEAGRCIMAGSIGSSFPRMFSDCSQAYLESFLERPQSVCLANAPDLSHLVGGPVCGNLFVERGEQCDCGPPEDCRNRCCNSTTCQLAEGAQCAHGTCCQECKVKPAGELCRPKKDMCDLEEFCDGRHPECPEDAFQENGTPCSGGYCYNGACPTLAQQCQAFWGPGGQAAEESCFSYDILPGCKASRYRADMCGVLQCKGGQQPLGRAICIVDVCHALTTEDGTAYEPVPEGTRCGPEKVCWKGRCQDLHVYRSSNCSAQCHNHGVCNHKQECHCHAGWAPPHCAKLLTEVHAASGSLPVFVVVVLVLLAVVLVTLAGIIVYRKARSRILSRNVAPKTTMGRSNPLFHQAASRVPAKGGAPAPSRGPQELVPTTHPGQPARHPASSVALKRPPPAPPVTVSSPPFPVPVYTRQAPKQVIKPTFAPPVPPVKPGAGAANPGPAEGAVGPKVALKPPIQRKQGAGAPTAP.

The signal sequence occupies residues 1-16 (MRGLGLWLLGAMMLPA). Topologically, residues 17 to 655 (IAPSRPWALM…EVHAASGSLP (639 aa)) are extracellular. 2 N-linked (GlcNAc...) asparagine glycosylation sites follow: N67 and N91. In terms of domain architecture, Peptidase M12B spans 200 to 400 (RYVELYVVVD…PQSVCLANAP (201 aa)). Cystine bridges form between C310–C395, C351–C379, C353–C362, C435–C457, C448–C454, C466–C486, C473–C503, C498–C508, C566–C613, C613–C623, C617–C629, and C631–C640. H334 contributes to the Zn(2+) binding site. E335 is an active-site residue. Zn(2+)-binding residues include H338 and H344. A Disintegrin domain is found at 408-494 (GPVCGNLFVE…ECPEDAFQEN (87 aa)). N-linked (GlcNAc...) asparagine glycosylation occurs at N436. An EGF-like domain is found at 609–641 (RSSNCSAQCHNHGVCNHKQECHCHAGWAPPHCA). N612 is a glycosylation site (N-linked (GlcNAc...) asparagine). The helical transmembrane segment at 656 to 676 (VFVVVVLVLLAVVLVTLAGII) threads the bilayer. The Cytoplasmic segment spans residues 677–824 (VYRKARSRIL…KQGAGAPTAP (148 aa)). Disordered stretches follow at residues 710-756 (VPAK…PVTV) and 776-824 (KPTF…PTAP). The segment covering 747 to 756 (RPPPAPPVTV) has biased composition (pro residues). Over residues 788–804 (PGAGAANPGPAEGAVGP) the composition is skewed to low complexity.

In terms of assembly, interacts with FST3. Zn(2+) is required as a cofactor. Expressed on neutrophils and monocytes.

It is found in the membrane. In terms of biological role, possible involvement in extravasation of leukocytes. In Homo sapiens (Human), this protein is Disintegrin and metalloproteinase domain-containing protein 8 (ADAM8).